The sequence spans 249 residues: uncharacterized protein (249 aa).

Its subcellular location is the cytoplasm. The protein localises to the nucleus. This is an uncharacterized protein from Schizosaccharomyces pombe (strain 972 / ATCC 24843) (Fission yeast).